A 615-amino-acid polypeptide reads, in one-letter code: Mitogen-activated protein kinase 18 (615 aa).

The region spanning 25-316 (YRILEVIGKG…PAEALADPYF (292 aa)) is the Protein kinase domain. Residues 31–39 (IGKGSYGVV) and Lys-54 each bind ATP. Catalysis depends on Asp-151, which acts as the Proton acceptor. At Thr-187 the chain carries Phosphothreonine. A TXY motif is present at residues 187 to 189 (TDY). Tyr-189 is subject to Phosphotyrosine. Phosphothreonine is present on Thr-192. 2 disordered regions span residues 414 to 483 (RSTV…ESSV) and 510 to 544 (NTMTNPENRNIEASSFPPKPQNPVHQFSPTEPPAA). The segment covering 415-426 (STVHSTVVHSTS) has biased composition (low complexity). Over residues 445 to 459 (NGASSAGHPSTSAYP) the composition is skewed to polar residues. The segment covering 464 to 473 (GPPPRVPPSG) has biased composition (pro residues). Composition is skewed to polar residues over residues 510–522 (NTMTNPENRNIEA) and 532–544 (PVHQFSPTEPPAA).

It belongs to the protein kinase superfamily. CMGC Ser/Thr protein kinase family. MAP kinase subfamily. As to quaternary structure, interacts with PHS1. Binds to MAPKKK20. Post-translationally, dually phosphorylated on Thr-187 and Tyr-189, which activates the enzyme. Phosphorylated by MAPKKK20. In terms of tissue distribution, expressed in roots, seedlings, leaves, flower buds, flowers and siliques.

Its subcellular location is the nucleus. The protein localises to the cytoplasm. It carries out the reaction L-seryl-[protein] + ATP = O-phospho-L-seryl-[protein] + ADP + H(+). The enzyme catalyses L-threonyl-[protein] + ATP = O-phospho-L-threonyl-[protein] + ADP + H(+). Activated by threonine and tyrosine phosphorylation. Inactivated by phosphatase PHS1. Functionally, mitogen-activated protein kinase (MAPK) that is specifically regulated by PHS1 and MAPKKK20 and mediates signaling that regulates cortical microtubule functions, maybe through regulation of microtubule dynamic instability. The chain is Mitogen-activated protein kinase 18 from Arabidopsis thaliana (Mouse-ear cress).